The chain runs to 114 residues: Large ribosomal subunit protein uL22 (114 aa).

It belongs to the universal ribosomal protein uL22 family. In terms of assembly, part of the 50S ribosomal subunit.

Functionally, this protein binds specifically to 23S rRNA; its binding is stimulated by other ribosomal proteins, e.g. L4, L17, and L20. It is important during the early stages of 50S assembly. It makes multiple contacts with different domains of the 23S rRNA in the assembled 50S subunit and ribosome. The globular domain of the protein is located near the polypeptide exit tunnel on the outside of the subunit, while an extended beta-hairpin is found that lines the wall of the exit tunnel in the center of the 70S ribosome. The protein is Large ribosomal subunit protein uL22 of Streptococcus sanguinis (strain SK36).